The sequence spans 515 residues: Protein FAM98A (515 aa).

Disordered stretches follow at residues 297–410 (VLMG…GYHG) and 432–515 (SGYQ…HYTS). Over residues 302–311 (VPDRGGRPNE) the composition is skewed to basic and acidic residues. Residues 382–394 (WTDGGSGSGGGYQ) are compositionally biased toward gly residues. A compositionally biased stretch (basic and acidic residues) spans 444 to 456 (RYQDGGHHGERGS). Residues 457–481 (GRGGRGGRGGRGGRGSQGGGWGGRG) are compositionally biased toward gly residues. Low complexity predominate over residues 485–501 (YHQGGQFEQHFQHGGYQ). The span at 502 to 515 (YSHSGFGQGRHYTS) shows a compositional bias: polar residues.

Belongs to the FAM98 family. As to quaternary structure, interacts (via N- and C-terminus) with DDX1. Interacts (via N- and C-terminus) with C14orf166. Interacts with FAM98B. Interacts with PLEKHM1 (via N- and C-terminus).

In terms of biological role, positively stimulates PRMT1-induced protein arginine methylation. Involved in skeletal homeostasis. Positively regulates lysosome peripheral distribution and ruffled border formation in osteoclasts. The sequence is that of Protein FAM98A from Mus musculus (Mouse).